The sequence spans 212 residues: Ribonuclease HII (212 aa).

The RNase H type-2 domain occupies 7 to 212 (SQILGIDEAG…TIENITKSTE (206 aa)). Asp-13, Glu-14, and Asp-111 together coordinate a divalent metal cation.

The protein belongs to the RNase HII family. Mn(2+) is required as a cofactor. Requires Mg(2+) as cofactor.

Its subcellular location is the cytoplasm. The catalysed reaction is Endonucleolytic cleavage to 5'-phosphomonoester.. Its function is as follows. Endonuclease that specifically degrades the RNA of RNA-DNA hybrids. The polypeptide is Ribonuclease HII (Methanosphaera stadtmanae (strain ATCC 43021 / DSM 3091 / JCM 11832 / MCB-3)).